Reading from the N-terminus, the 986-residue chain is E3 ubiquitin-protein ligase Arkadia (986 aa).

Glycyl lysine isopeptide (Lys-Gly) (interchain with G-Cter in SUMO2) cross-links involve residues Lys-19, Lys-28, Lys-34, Lys-47, Lys-59, Lys-73, Lys-87, Lys-96, and Lys-110. A compositionally biased stretch (basic and acidic residues) spans 66 to 89; sequence HLCDDSQKQEKDMNGNQQEQEKSL. The tract at residues 66 to 106 is disordered; it reads HLCDDSQKQEKDMNGNQQEQEKSLVVRKKRKSQQAGPSYVQ. The interval 120–191 is disordered; that stretch reads QHLGTPSDED…HKWPRTETES (72 aa). Residues 132–151 show a composition bias toward low complexity; that stretch reads SSFSDCLSSPSSSLHFGDSD. Residues 164–173 show a composition bias toward polar residues; sequence RHSQTILNAK. Residue Lys-173 forms a Glycyl lysine isopeptide (Lys-Gly) (interchain with G-Cter in SUMO2) linkage. Positions 174–184 are enriched in basic residues; that stretch reads SRSHSARSHKW. Residues Lys-198 and Lys-218 each participate in a glycyl lysine isopeptide (Lys-Gly) (interchain with G-Cter in SUMO2) cross-link. The segment at 241–404 is interaction with AXIN1; it reads VLARRKYALL…VPTTSARMES (164 aa). The segment at 248–277 is disordered; that stretch reads ALLPSSSSSSENDLSSESSSSSSTEGEEDL. A compositionally biased stretch (low complexity) spans 252 to 271; the sequence is SSSSSSENDLSSESSSSSST. The short motif at 300–304 is the SUMO interaction motif 1 (SIM) element; it reads VVVIE. An SUMO interaction motif 2 (SIM) motif is present at residues 325–331; that stretch reads EVEIVTV. The disordered stretch occupies residues 337–373; sequence SRSTLGHSRSHWSQGSSSHASRPQEPRNRSRISTVIQ. Positions 347–357 are enriched in low complexity; sequence HWSQGSSSHAS. The short motif at 382-386 is the SUMO interaction motif 3 (SIM) element; it reads VVDLT. Disordered stretches follow at residues 389-471, 506-561, 610-646, 659-684, and 696-719; these read EDEP…ETGP, QQHG…SYHE, APSQ…RHYM, HQAS…VDYV, and ISSH…TAAP. Over residues 395-466 the composition is skewed to polar residues; that stretch reads VPTTSARMES…DSRRTTSSAV (72 aa). Positions 508-522 are enriched in basic residues; that stretch reads HGHHFQHHHHHHHTP. Positions 551 to 561 are enriched in polar residues; sequence ANSSSGTSYHE. Over residues 670–680 the composition is skewed to pro residues; it reads NPPPQTQPPPQ. The interval 907–909 is ubiquitin binding; sequence YPH. Glycyl lysine isopeptide (Lys-Gly) (interchain with G-Cter in SUMO2) cross-links involve residues Lys-915 and Lys-919. Cys-934 and Cys-937 together coordinate Zn(2+). The RING-type; atypical zinc finger occupies 934-975; the sequence is CTICLSILEEGEDVRRLPCMHLFHQVCVDQWLITNKKCPICR. The interval 949–953 is ubiquitin binding; the sequence is RLPCM. Zn(2+) contacts are provided by His-957 and Cys-960.

It belongs to the Arkadia family. Monomer. Interacts with SMAD6, SMAD7, AXIN1, AXIN2 and SKIL isoform SNON. Interacts with (phosphorylated) SMAD2 and SMAD3. Part of a complex containing RNF111, AXIN1 and SMAD7. Interacts (via SIM domains) with SUMO1 and SUMO2.

Its subcellular location is the nucleus. The protein resides in the cytoplasm. It is found in the PML body. It catalyses the reaction S-ubiquitinyl-[E2 ubiquitin-conjugating enzyme]-L-cysteine + [acceptor protein]-L-lysine = [E2 ubiquitin-conjugating enzyme]-L-cysteine + N(6)-ubiquitinyl-[acceptor protein]-L-lysine.. Its pathway is protein modification; protein ubiquitination. Binds free ubiquitin non-covalently via its RING-type zinc finger. Ubiquitin-binding leads to enhance the E3 ubiquitin-protein ligase activity by stabilizing the ubiquitin-conjugating enzyme E2 (donor ubiquitin) in the 'closed' conformation and activating ubiquitin transfer. Its function is as follows. E3 ubiquitin-protein ligase. Required for mesoderm patterning during embryonic development. Acts as an enhancer of the transcriptional responses of the SMAD2/SMAD3 effectors, which are activated downstream of BMP. Acts by mediating ubiquitination and degradation of SMAD inhibitors such as SMAD7, inducing their proteasomal degradation and thereby enhancing the transcriptional activity of TGF-beta and BMP. In addition to enhance transcription of SMAD2/SMAD3 effectors, also regulates their turnover by mediating their ubiquitination and subsequent degradation, coupling their activation with degradation, thereby ensuring that only effectors 'in use' are degraded. Activates SMAD3/SMAD4-dependent transcription by triggering signal-induced degradation of SNON isoform of SKIL. Associates with UBE2D2 as an E2 enzyme. Specifically binds polysumoylated chains via SUMO interaction motifs (SIMs) and mediates ubiquitination of sumoylated substrates. Catalyzes 'Lys-63'-linked ubiquitination of sumoylated XPC in response to UV irradiation, promoting nucleotide excision repair. Mediates ubiquitination and degradation of sumoylated PML. The regulation of the BMP-SMAD signaling is however independent of sumoylation and is not dependent of SUMO interaction motifs (SIMs). This chain is E3 ubiquitin-protein ligase Arkadia (RNF111), found in Pongo abelii (Sumatran orangutan).